A 270-amino-acid polypeptide reads, in one-letter code: MTVRQRLLSYFFNRLRMNYPQILSPVLNFLHCPTPQAWIVQARDPQNLPLLLTDHLICELKAAQTALLLVRKYVADKSGADALLSWLQPYEAFAFRQGPEPDFVALHKQISKSAMPQTDDPWGRQLIDRMVLLIKEELHHFWQVREVMQARNIPYVKITASRYAKGMLKAVRTHEPLTLIDKLICGAYIEARSCERFAALAPWLDEDLQTFYLSLLRSEARHYQDYLALAQQISAEDISARVRYFGEVEADLILSPDREFRFHSGVPAAG.

Residues E59, E137, H140, E190, E219, and H222 each coordinate Fe cation.

The protein belongs to the MiaE family. In terms of assembly, monomer. Fe cation is required as a cofactor.

The enzyme catalyses 2-methylsulfanyl-N(6)-dimethylallyladenosine(37) in tRNA + AH2 + O2 = N(6)-[(2E)-4-hydroxy-3-methylbut-2-en-1-yl]-2-(methylsulfanyl)adenosine(37) in tRNA + A + H2O. It functions in the pathway tRNA modification; 2-methylthio-N-6-(cis-hydroxy)isopentenyl adenosine-tRNA biosynthesis. In terms of biological role, involved in specific tRNA modification. Catalyzes the oxygen-dependent hydroxylation of 2-methylthio-N-6-isopentenyl adenosine (ms2i6A) to produce 2-methylthio-N-6-(cis-hydroxy)isopentenyl adenosine (ms2io6A) at position 37 in tRNAs. Can also use N6-(dimethylallyl)adenosine (i6A) as substrate, with lower efficiency. The presence of the hydroxyl group on the tRNA may regulate the ability of S.typhimurium to grow on the citric acid cycle (CAC) intermediates succinate, fumarate and malate. The polypeptide is tRNA 2-(methylsulfanyl)-N(6)-isopentenyladenosine(37) hydroxylase (Salmonella typhimurium (strain LT2 / SGSC1412 / ATCC 700720)).